The primary structure comprises 322 residues: Ribosome biogenesis protein RLP7 (322 aa).

Over residues 1–16 (MSSTQDSKAQTLNSNP) the composition is skewed to polar residues. The tract at residues 1-52 (MSSTQDSKAQTLNSNPEILLRKRRNADRTRIERQELAKKKREEQIKKKRSNK) is disordered. S2 carries the post-translational modification N-acetylserine. S14 is modified (phosphoserine). The span at 26 to 45 (ADRTRIERQELAKKKREEQI) shows a compositional bias: basic and acidic residues. At T120 the chain carries Phosphothreonine. Residue S278 is modified to Phosphoserine.

Belongs to the universal ribosomal protein uL30 family.

The protein localises to the nucleus. It is found in the nucleolus. Its function is as follows. Involved in the biogenesis of the 60S ribosomal subunit. May act as a specificity factor that binds precursor rRNAs and tethers the enzymes that carry out the early 5' to 3' exonucleolytic reactions that generate the mature rRNAs. This is Ribosome biogenesis protein RLP7 (RLP7) from Saccharomyces cerevisiae (strain ATCC 204508 / S288c) (Baker's yeast).